Here is a 669-residue protein sequence, read N- to C-terminus: DNA ligase (669 aa).

NAD(+)-binding positions include 34-38 (DAEYD), 83-84 (SL), and Glu-114. The active-site N6-AMP-lysine intermediate is the Lys-116. Arg-137, Glu-171, Lys-287, and Lys-311 together coordinate NAD(+). Residues Cys-405, Cys-408, Cys-423, and Cys-428 each contribute to the Zn(2+) site. Positions 591–669 (NVESYFAGKT…EERFLQELNK (79 aa)) constitute a BRCT domain.

The protein belongs to the NAD-dependent DNA ligase family. LigA subfamily. It depends on Mg(2+) as a cofactor. The cofactor is Mn(2+).

The catalysed reaction is NAD(+) + (deoxyribonucleotide)n-3'-hydroxyl + 5'-phospho-(deoxyribonucleotide)m = (deoxyribonucleotide)n+m + AMP + beta-nicotinamide D-nucleotide.. Functionally, DNA ligase that catalyzes the formation of phosphodiester linkages between 5'-phosphoryl and 3'-hydroxyl groups in double-stranded DNA using NAD as a coenzyme and as the energy source for the reaction. It is essential for DNA replication and repair of damaged DNA. This chain is DNA ligase, found in Bacillus cereus (strain ZK / E33L).